A 265-amino-acid chain; its full sequence is ClpXP adapter protein SpxH (265 aa).

It belongs to the SpxH family. As to quaternary structure, interacts with Spx.

Its subcellular location is the cytoplasm. In terms of biological role, adapter protein required for efficient degradation of Spx by ClpXP under non-stress conditions. Interaction with Spx stabilizes Spx and exposes the C-terminus of Spx for recognition and proteolysis by ClpXP. This chain is ClpXP adapter protein SpxH, found in Staphylococcus haemolyticus (strain JCSC1435).